The chain runs to 523 residues: Probable aminopeptidase NPEPL1 (523 aa).

Residues Lys-260 and Asp-265 each contribute to the Zn(2+) site. Lys-272 is an active-site residue. The Zn(2+) site is built by Asp-283, Asp-342, and Glu-344. Arg-346 is an active-site residue.

It belongs to the peptidase M17 family. Zn(2+) serves as cofactor. Mn(2+) is required as a cofactor. In terms of tissue distribution, ubiquitously expressed.

Its function is as follows. Probably catalyzes the removal of unsubstituted N-terminal amino acids from various peptides. This is Probable aminopeptidase NPEPL1 (NPEPL1) from Homo sapiens (Human).